A 901-amino-acid chain; its full sequence is HTH-type transcriptional regulator MalT (901 aa).

39–46 (SPAGYGKT) is an ATP binding site. Residues 829-894 (ELIRTSPLTQ…DAVQHAQQLL (66 aa)) enclose the HTH luxR-type domain. The segment at residues 853–872 (NEQIAGELEVAATTIKTHIR) is a DNA-binding region (H-T-H motif).

It belongs to the MalT family. In terms of assembly, monomer in solution. Oligomerizes to an active state in the presence of the positive effectors ATP and maltotriose.

Its activity is regulated as follows. Activated by ATP and maltotriose, which are both required for DNA binding. In terms of biological role, positively regulates the transcription of the maltose regulon whose gene products are responsible for uptake and catabolism of malto-oligosaccharides. Specifically binds to the promoter region of its target genes, recognizing a short DNA motif called the MalT box. This chain is HTH-type transcriptional regulator MalT, found in Escherichia fergusonii (strain ATCC 35469 / DSM 13698 / CCUG 18766 / IAM 14443 / JCM 21226 / LMG 7866 / NBRC 102419 / NCTC 12128 / CDC 0568-73).